Consider the following 471-residue polypeptide: UDP-glycosyltransferase CGT (471 aa).

Histidine 24 acts as the Proton acceptor in catalysis. An anthocyanidin is bound at residue histidine 24. Catalysis depends on aspartate 120, which acts as the Charge relay. Threonine 143 is a UDP-alpha-D-glucose binding site. The interval 280 to 281 (SR) is UDP. Residues valine 343, glutamine 345, histidine 360, tryptophan 363, asparagine 364, serine 365, and glutamate 368 each coordinate UDP-alpha-D-glucose. Glycine 383 contributes to the an anthocyanidin binding site. UDP-alpha-D-glucose-binding residues include aspartate 384 and glutamine 385.

Belongs to the UDP-glycosyltransferase family.

It catalyses the reaction a 3'-hydro-2'-hydroxy-beta-oxodihydrochalcone + UDP-alpha-D-glucose = a 3'-(beta-D-glucopyranosyl)-2'-hydroxy-beta-oxodihydrochalcone + UDP + H(+). UDP-glucose-dependent glucosyltransferase catalyzing the c-glucosylation of 2-hydroxyflavanones. The polypeptide is UDP-glycosyltransferase CGT (Oryza sativa subsp. japonica (Rice)).